The chain runs to 468 residues: Anthocyanidin 3-O-glucoside 2'''-O-xylosyltransferase (468 aa).

UDP-alpha-D-xylose is bound by residues Ser284, 344–346 (IQQ), 361–369 (HCGFGSMWE), and 383–386 (HGEQ).

Belongs to the UDP-glycosyltransferase family.

It carries out the reaction an anthocyanidin 3-O-beta-D-glucoside + UDP-alpha-D-xylose = an anthocyanidin 3-O-beta-D-sambubioside + UDP + 2 H(+). It functions in the pathway secondary metabolite biosynthesis; flavonoid biosynthesis. Contributes to the last few anthocyanin biosynthetic steps. Converts cyanidin 3-O-glucoside to cyanidin 3-O-xylosyl(1-&gt;2)glucoside. Can use 3-O-glucosylated anthocyanidins/flavonols and uridine diphosphate (UDP)-xylose as substrates. The protein is Anthocyanidin 3-O-glucoside 2'''-O-xylosyltransferase (A3G2XYLT) of Arabidopsis thaliana (Mouse-ear cress).